We begin with the raw amino-acid sequence, 215 residues long: Protein C' (215 aa).

A disordered region spans residues 12–34 (MPSFLKKILKLRGRRQEDESRSR). The tract at residues 15–22 (FLKKILKL) is involved in self-degradation and in host STAT1 degradation.

It belongs to the respirovirus protein C family. The different isoforms interact (via C-terminus) with unphosphorylated and phosphorylated human STAT1 (via N-terminus), favoring the formation of parallel STAT1 homodimers. The different isoforms do not interact with host STAT2. C protein interacts with L protein; this interaction has an inhibitory effect on viral transcription and replication. Post-translationally, Y1 and Y2 proteins are produced not only by alternative initiation, but also by proteolytic cleavage of C'. Only alternative initiation is detected in vitro, whereas in vivo cleavage seems to be predominant.

It is found in the host cytoplasm. Its function is as follows. The different products prevent the establishment of cellular antiviral state by blocking the interferon-alpha/beta (IFN-alpha/beta) and IFN-gamma signaling pathways. They inhibit IFN-alpha/beta induced tyrosine phosphorylation of STAT1 and STAT2. Blocking the IFN-alpha/beta pathway requires binding to STAT1 in the cytoplasm. They inhibit IFN-gamma induced serine phosphorylation of STAT1. Block the IFN-gamma pathway by binding to and stabilizing the parallel form of the STAT1 dimer, further inducing high-molecular-weight complex formation and inhibition of transcription by IFN-gamma. May also have a role in preventing the cell to enter apoptosis. Modulate regulation of viral transcription and replication. Overexpression inhibits the viral RNA polymerase. The absence of all C', C, Y1 and Y2 proteins leads to viral delayed growth. Plays an important role in virion particles release. Modulates virion shape. This chain is Protein C' (P/V/C), found in Sendai virus (strain Nagoya) (SeV).